The sequence spans 385 residues: 4-hydroxy-3-methylbut-2-en-1-yl diphosphate synthase (flavodoxin) 2 (385 aa).

Positions 281, 284, 316, and 323 each coordinate [4Fe-4S] cluster.

It belongs to the IspG family. [4Fe-4S] cluster serves as cofactor.

It carries out the reaction (2E)-4-hydroxy-3-methylbut-2-enyl diphosphate + oxidized [flavodoxin] + H2O + 2 H(+) = 2-C-methyl-D-erythritol 2,4-cyclic diphosphate + reduced [flavodoxin]. The protein operates within isoprenoid biosynthesis; isopentenyl diphosphate biosynthesis via DXP pathway; isopentenyl diphosphate from 1-deoxy-D-xylulose 5-phosphate: step 5/6. Functionally, converts 2C-methyl-D-erythritol 2,4-cyclodiphosphate (ME-2,4cPP) into 1-hydroxy-2-methyl-2-(E)-butenyl 4-diphosphate. The sequence is that of 4-hydroxy-3-methylbut-2-en-1-yl diphosphate synthase (flavodoxin) 2 from Streptomyces avermitilis (strain ATCC 31267 / DSM 46492 / JCM 5070 / NBRC 14893 / NCIMB 12804 / NRRL 8165 / MA-4680).